The chain runs to 754 residues: Phosphatidylinositol 4-phosphate 5-kinase 7 (754 aa).

MORN repeat units lie at residues 16-38 (YSGE…DGTI), 39-61 (YEGD…SGAK), 62-84 (YEGD…DESV), 85-107 (YSGA…NSDL), 108-130 (YDGL…NGNR), 131-153 (YIGN…NGDL), 154-176 (YDGF…DGCL), and 177-198 (YYGT…AGTK). The 422-residue stretch at 329-750 (GEHNYYLMLN…RFVNFLHKVF (422 aa)) folds into the PIPK domain. The tract at residues 710 to 731 (YNTKKKVEHTCKSLQYDPMTIS) is activation loop.

The enzyme catalyses a 1,2-diacyl-sn-glycero-3-phospho-(1D-myo-inositol 4-phosphate) + ATP = a 1,2-diacyl-sn-glycero-3-phospho-(1D-myo-inositol-4,5-bisphosphate) + ADP + H(+). The polypeptide is Phosphatidylinositol 4-phosphate 5-kinase 7 (PIP5K7) (Arabidopsis thaliana (Mouse-ear cress)).